Reading from the N-terminus, the 88-residue chain is uncharacterized protein (88 aa).

2 helical membrane passes run 27–46 and 61–83; these read LFIF…ETPH and SMCL…LILI.

The protein resides in the membrane. This is an uncharacterized protein from Saccharomyces cerevisiae (strain ATCC 204508 / S288c) (Baker's yeast).